We begin with the raw amino-acid sequence, 45 residues long: MFKPDFKSRLLYFVLFVDIYGIFTNNIDKIVYKKVDCFKINIFIF.

The helical transmembrane segment at 10–27 (LLYFVLFVDIYGIFTNNI) threads the bilayer.

It localises to the membrane. This is an uncharacterized protein from Dictyostelium discoideum (Social amoeba).